A 230-amino-acid polypeptide reads, in one-letter code: Claudin-2 (230 aa).

Residues 1–7 (MASLGVQ) lie on the Cytoplasmic side of the membrane. A helical transmembrane segment spans residues 8–28 (LVGYILGLLGLLGTSIAMLLP). Over 29 to 81 (NWRTSSYVGASIVTAVGFSKGLWMECATHSTGITQCDIYSTLLGLPADIQAAQ) the chain is Extracellular. Cysteine 54 and cysteine 64 form a disulfide bridge. Residues 82–102 (AMMVTSSAMSSLACIISVVGM) traverse the membrane as a helical segment. The Cytoplasmic segment spans residues 103 to 116 (RCTVFCQDSRAKDR). Residues 117–137 (VAVVGGVFFILGGILGFIPVA) form a helical membrane-spanning segment. Residues 138–162 (WNLHGILRDFYSPLVPDSMKFEIGE) lie on the Extracellular side of the membrane. A helical transmembrane segment spans residues 163–183 (ALYLGIISALFSLVAGVILCF). At 184–230 (SCSPQGNRTNYYDGYQAQPLATRSSPRSAQQPKAKSEFNSYSLTGYV) the chain is on the cytoplasmic side. Positions 205–230 (TRSSPRSAQQPKAKSEFNSYSLTGYV) are disordered. Residue lysine 218 forms a Glycyl lysine isopeptide (Lys-Gly) (interchain with G-Cter in SUMO) linkage. Serine 219 and serine 223 each carry phosphoserine. Positions 229-230 (YV) are interactions with TJP1, TJP2 and TJP3.

It belongs to the claudin family. As to quaternary structure, can form homo- and heteropolymers with other claudins to mediate paracellular barrier and channel functions of tight junctions in response to physiological stimuli. Homopolymers interact with CLDN3, but not CLDN1, homopolymers. Directly interacts with TJP1/ZO-1, TJP2/ZO-2 and TJP3/ZO-3. Post-translationally, the disulfide bond is necessary for pore formation, but is not required for correct protein trafficking. As to expression, expressed in the kidney, liver and intestine, with higher levels in the ileum than in the jejunum. Low levels in the brain. Expressed in colonic epithelium (at protein level). Expressed in the perivenous regions, bile ducts, and gallbladder epithelium (at protein level).

The protein resides in the cell junction. Its subcellular location is the tight junction. It is found in the cell membrane. It catalyses the reaction Na(+)(in) = Na(+)(out). The catalysed reaction is K(+)(in) = K(+)(out). The enzyme catalyses Rb(+)(in) = Rb(+)(out). It carries out the reaction Li(+)(in) = Li(+)(out). It catalyses the reaction Cs(+)(in) = Cs(+)(out). The catalysed reaction is Ca(2+)(in) = Ca(2+)(out). The enzyme catalyses methylamine(out) = methylamine(in). It carries out the reaction choline(out) = choline(in). It catalyses the reaction H2O(in) = H2O(out). The channel permeability is down-regulated at acidic pH. In terms of biological role, forms paracellular channels: polymerizes in tight junction strands with cation- and water-selective channels through the strands, conveying epithelial permeability in a process known as paracellular tight junction permeability. In intestinal epithelium, allows for sodium and water fluxes from the peritoneal side to the lumen of the intestine to regulate nutrient absorption and clear enteric pathogens as part of mucosal immune response. In kidney, allows passive sodium and calcium reabsorption across proximal tubules from the lumen back to the bloodstream. In the hepatobiliary tract, allows paracellular water and cation fluxes in the hepatic perivenous areas and biliary epithelium to generate bile flow and maintain osmotic gradients. This is Claudin-2 from Mus musculus (Mouse).